Consider the following 144-residue polypeptide: 3-dehydroquinate dehydratase (144 aa).

Tyrosine 22 acts as the Proton acceptor in catalysis. Positions 71, 77, and 84 each coordinate substrate. Histidine 97 (proton donor) is an active-site residue. Substrate-binding positions include 98–99 and arginine 108; that span reads IS.

This sequence belongs to the type-II 3-dehydroquinase family. In terms of assembly, homododecamer.

It carries out the reaction 3-dehydroquinate = 3-dehydroshikimate + H2O. Its pathway is metabolic intermediate biosynthesis; chorismate biosynthesis; chorismate from D-erythrose 4-phosphate and phosphoenolpyruvate: step 3/7. Its function is as follows. Catalyzes a trans-dehydration via an enolate intermediate. This Thermotoga petrophila (strain ATCC BAA-488 / DSM 13995 / JCM 10881 / RKU-1) protein is 3-dehydroquinate dehydratase.